We begin with the raw amino-acid sequence, 339 residues long: Biotin synthase (339 aa).

The region spanning 47-276 (FYGKKVKLNM…SKEIRISGGR (230 aa)) is the Radical SAM core domain. Residues cysteine 65, cysteine 69, and cysteine 72 each contribute to the [4Fe-4S] cluster site. Residues cysteine 109, cysteine 141, cysteine 201, and arginine 271 each coordinate [2Fe-2S] cluster.

It belongs to the radical SAM superfamily. Biotin synthase family. As to quaternary structure, homodimer. The cofactor is [4Fe-4S] cluster. It depends on [2Fe-2S] cluster as a cofactor.

It carries out the reaction (4R,5S)-dethiobiotin + (sulfur carrier)-SH + 2 reduced [2Fe-2S]-[ferredoxin] + 2 S-adenosyl-L-methionine = (sulfur carrier)-H + biotin + 2 5'-deoxyadenosine + 2 L-methionine + 2 oxidized [2Fe-2S]-[ferredoxin]. The protein operates within cofactor biosynthesis; biotin biosynthesis; biotin from 7,8-diaminononanoate: step 2/2. Its function is as follows. Catalyzes the conversion of dethiobiotin (DTB) to biotin by the insertion of a sulfur atom into dethiobiotin via a radical-based mechanism. In Bacillus velezensis (strain DSM 23117 / BGSC 10A6 / LMG 26770 / FZB42) (Bacillus amyloliquefaciens subsp. plantarum), this protein is Biotin synthase.